An 82-amino-acid polypeptide reads, in one-letter code: Omega-ctenitoxin-Pn1a (82 aa).

Residues 1–21 (MWLKIQVFLLAITLITLGIQA) form the signal peptide. Residues 22–37 (EPNSSPNNPLIEEEAR) constitute a propeptide that is removed on maturation. 4 disulfides stabilise this stretch: C39-C54, C46-C59, C53-C70, and C61-C68. A propeptide spanning residues 72–82 (KKFIEFFGGGK) is cleaved from the precursor.

Belongs to the neurotoxin 02 (plectoxin) family. Expressed by the venom gland.

The protein resides in the secreted. In terms of biological role, antagonist of L-type calcium channels (Cav1/CACNA1). Induces immediate clockwise gyration and flaccid paralysis after 6 hours at dose levels of 5 ug per mouse. This Phoneutria nigriventer (Brazilian armed spider) protein is Omega-ctenitoxin-Pn1a.